The sequence spans 115 residues: U3-lycotoxin-Ls1s (115 aa).

An N-terminal signal peptide occupies residues 1 to 20 (MKFVLLFGVFLLTLFSYSSS). A propeptide spanning residues 21-44 (EMLDDFDQADEDELLSLIEKEEAR) is cleaved from the precursor. 4 cysteine pairs are disulfide-bonded: C48–C63, C55–C72, C62–C87, and C74–C85.

The protein belongs to the neurotoxin 19 (CSTX) family. 01 subfamily. Expressed by the venom gland.

The protein resides in the secreted. This is U3-lycotoxin-Ls1s from Lycosa singoriensis (Wolf spider).